Here is a 721-residue protein sequence, read N- to C-terminus: DNA ligase (721 aa).

Residues 39-43 (DAEYD), 89-90 (SL), and E123 contribute to the NAD(+) site. K125 (N6-AMP-lysine intermediate) is an active-site residue. 4 residues coordinate NAD(+): R146, E186, K302, and K326. Residues C418, C421, C436, and C442 each contribute to the Zn(2+) site. The disordered stretch occupies residues 556–588 (QASSAAREGEPANADGAYDPATVTPDSDTAGAE). The BRCT domain maps to 641-721 (TKDSAVAGKT…AWAEIVRQAG (81 aa)).

This sequence belongs to the NAD-dependent DNA ligase family. LigA subfamily. It depends on Mg(2+) as a cofactor. Mn(2+) serves as cofactor.

It catalyses the reaction NAD(+) + (deoxyribonucleotide)n-3'-hydroxyl + 5'-phospho-(deoxyribonucleotide)m = (deoxyribonucleotide)n+m + AMP + beta-nicotinamide D-nucleotide.. In terms of biological role, DNA ligase that catalyzes the formation of phosphodiester linkages between 5'-phosphoryl and 3'-hydroxyl groups in double-stranded DNA using NAD as a coenzyme and as the energy source for the reaction. It is essential for DNA replication and repair of damaged DNA. This Novosphingobium aromaticivorans (strain ATCC 700278 / DSM 12444 / CCUG 56034 / CIP 105152 / NBRC 16084 / F199) protein is DNA ligase.